The chain runs to 596 residues: Actin-histidine N-methyltransferase (596 aa).

The interval 1 to 22 is disordered; sequence MGKKSRVKTQKSGTGATATVSP. Polar residues predominate over residues 10-20; the sequence is QKSGTGATATV. S-adenosyl-L-methionine contacts are provided by residues Arg-75, 104-106, Arg-254, 275-279, and 325-327; these read EGF, DMCNH, and SGF. The 221-residue stretch at 94–314 folds into the SET domain; it reads EGFEMVNFKE…AGDQIYIFYG (221 aa). Positions 551-596 are disordered; the sequence is GLVNGESLIPNGTRSENESLSPEESENTTGDTEESSGSMDAVKERL. Residues 571 to 584 are compositionally biased toward acidic residues; the sequence is SPEESENTTGDTEE.

Belongs to the class V-like SAM-binding methyltransferase superfamily. SETD3 actin-histidine methyltransferase family. As to quaternary structure, interacts with MYOD1. Phosphorylated by GSK3B, which is required for recognition by the SCF(FBXW7) complex and subsequent degradation. Post-translationally, ubiquitinated by the SCF(FBXW7) complex following phosphorylation by GSK3B, leading to its degradation by the proteasome.

Its subcellular location is the cytoplasm. The protein localises to the nucleus. The enzyme catalyses L-histidyl-[protein] + S-adenosyl-L-methionine = N(tele)-methyl-L-histidyl-[protein] + S-adenosyl-L-homocysteine + H(+). Protein-histidine N-methyltransferase that specifically mediates 3-methylhistidine (tele-methylhistidine) methylation of actin at 'His-73'. Histidine methylation of actin is required for smooth muscle contraction of the laboring uterus during delivery. Does not have protein-lysine N-methyltransferase activity and probably only catalyzes histidine methylation of actin. This is Actin-histidine N-methyltransferase from Rattus norvegicus (Rat).